Here is a 353-residue protein sequence, read N- to C-terminus: Nicotinate-nucleotide--dimethylbenzimidazole phosphoribosyltransferase (353 aa).

Glu319 acts as the Proton acceptor in catalysis.

This sequence belongs to the CobT family.

It carries out the reaction 5,6-dimethylbenzimidazole + nicotinate beta-D-ribonucleotide = alpha-ribazole 5'-phosphate + nicotinate + H(+). Its pathway is nucleoside biosynthesis; alpha-ribazole biosynthesis; alpha-ribazole from 5,6-dimethylbenzimidazole: step 1/2. Its function is as follows. Catalyzes the synthesis of alpha-ribazole-5'-phosphate from nicotinate mononucleotide (NAMN) and 5,6-dimethylbenzimidazole (DMB). This is Nicotinate-nucleotide--dimethylbenzimidazole phosphoribosyltransferase from Chlorobaculum tepidum (strain ATCC 49652 / DSM 12025 / NBRC 103806 / TLS) (Chlorobium tepidum).